Here is a 93-residue protein sequence, read N- to C-terminus: Ferredoxin-2 (93 aa).

The 2Fe-2S ferredoxin-type domain occupies 2–91; sequence YKVTLKTPDG…DVVIETHKED (90 aa). The [2Fe-2S] cluster site is built by C37, C42, C45, and C75.

This sequence belongs to the 2Fe2S plant-type ferredoxin family. The cofactor is [2Fe-2S] cluster.

The protein localises to the plastid. It is found in the chloroplast. Functionally, ferredoxins are iron-sulfur proteins that transfer electrons in a wide variety of metabolic reactions. The chain is Ferredoxin-2 from Equisetum telmateia (Great horsetail).